A 259-amino-acid polypeptide reads, in one-letter code: GTP cyclohydrolase FolE2 (259 aa).

It belongs to the GTP cyclohydrolase IV family.

The catalysed reaction is GTP + H2O = 7,8-dihydroneopterin 3'-triphosphate + formate + H(+). The protein operates within cofactor biosynthesis; 7,8-dihydroneopterin triphosphate biosynthesis; 7,8-dihydroneopterin triphosphate from GTP: step 1/1. Its function is as follows. Converts GTP to 7,8-dihydroneopterin triphosphate. This chain is GTP cyclohydrolase FolE2, found in Thermotoga neapolitana (strain ATCC 49049 / DSM 4359 / NBRC 107923 / NS-E).